The chain runs to 210 residues: Glycerol-3-phosphate acyltransferase (210 aa).

5 helical membrane passes run 10–30 (ALIL…GIVI), 59–79 (PAAL…VLIA), 87–107 (AAQL…WLGF), 116–136 (FLGT…LTWL), and 161–181 (LLLG…LIFI).

It belongs to the PlsY family. In terms of assembly, probably interacts with PlsX.

It is found in the cell inner membrane. The enzyme catalyses an acyl phosphate + sn-glycerol 3-phosphate = a 1-acyl-sn-glycero-3-phosphate + phosphate. The protein operates within lipid metabolism; phospholipid metabolism. Catalyzes the transfer of an acyl group from acyl-phosphate (acyl-PO(4)) to glycerol-3-phosphate (G3P) to form lysophosphatidic acid (LPA). This enzyme utilizes acyl-phosphate as fatty acyl donor, but not acyl-CoA or acyl-ACP. In Cereibacter sphaeroides (strain ATCC 17025 / ATH 2.4.3) (Rhodobacter sphaeroides), this protein is Glycerol-3-phosphate acyltransferase.